A 192-amino-acid polypeptide reads, in one-letter code: Thiamine transporter ThiT (192 aa).

The next 6 helical transmembrane spans lie at 10-30 (LIEI…SGMF), 31-51 (LSMP…LISF), 57-77 (AGLT…NLFA), 81-101 (VQLL…GCFA), 123-143 (AVFI…AVFF), and 164-184 (YMVP…MTAP).

It belongs to the vitamin uptake transporter (VUT/ECF) (TC 2.A.88) family. Thiamine transporter subfamily. As to quaternary structure, forms a stable energy-coupling factor (ECF) transporter complex composed of a membrane-embedded substrate-binding protein (S component), two ATP-binding proteins (A components) and a transmembrane protein (T component).

It is found in the cell membrane. Probably a thiamine-binding protein that interacts with the energy-coupling factor (ECF) ABC-transporter complex. Unlike classic ABC transporters this ECF transporter provides the energy necessary to transport a number of different substrates. The substrates themselves are bound by transmembrane, not extracytoplasmic soluble proteins. This Bacillus subtilis (strain 168) protein is Thiamine transporter ThiT (thiT).